Here is a 161-residue protein sequence, read N- to C-terminus: Ribonuclease H (161 aa).

The 144-residue stretch at 12–155 (QPQHVVIYTD…ADALANKGVE (144 aa)) folds into the RNase H type-1 domain. 4 residues coordinate Mg(2+): Asp-21, Glu-59, Asp-81, and Asp-147.

This sequence belongs to the RNase H family. In terms of assembly, monomer. Mg(2+) is required as a cofactor.

Its subcellular location is the cytoplasm. It carries out the reaction Endonucleolytic cleavage to 5'-phosphomonoester.. Its function is as follows. Endonuclease that specifically degrades the RNA of RNA-DNA hybrids. This chain is Ribonuclease H, found in Polaromonas naphthalenivorans (strain CJ2).